The following is a 233-amino-acid chain: 4'-phosphopantetheinyl transferase psf-1 (233 aa).

Positions 110, 112, and 154 each coordinate Mg(2+). Positions 161 to 192 (GKGISYGLSSFTARLSEDGQATLRLPDHEAPC) are peptidyl carrier protein binding.

Belongs to the P-Pant transferase superfamily. Gsp/Sfp/HetI/AcpT family. Mg(2+) is required as a cofactor.

It carries out the reaction apo-[peptidyl-carrier protein] + CoA = holo-[peptidyl-carrier protein] + adenosine 3',5'-bisphosphate + H(+). Probably activates the peptidyl carrier protein (PCP) domains of surfactin synthetase by transferring the 4'-phosphopantetheinyl moiety of coenzyme A (CoA) to a serine residue. Required for the production of the lipopeptide antibiotic, surfactin. The sequence is that of 4'-phosphopantetheinyl transferase psf-1 (psf-1) from Bacillus pumilus (Bacillus mesentericus).